The sequence spans 88 residues: Small ribosomal subunit protein uS15 (88 aa).

The protein belongs to the universal ribosomal protein uS15 family. In terms of assembly, part of the 30S ribosomal subunit. Forms a bridge to the 50S subunit in the 70S ribosome, contacting the 23S rRNA.

One of the primary rRNA binding proteins, it binds directly to 16S rRNA where it helps nucleate assembly of the platform of the 30S subunit by binding and bridging several RNA helices of the 16S rRNA. Its function is as follows. Forms an intersubunit bridge (bridge B4) with the 23S rRNA of the 50S subunit in the ribosome. The chain is Small ribosomal subunit protein uS15 from Albidiferax ferrireducens (strain ATCC BAA-621 / DSM 15236 / T118) (Rhodoferax ferrireducens).